The primary structure comprises 212 residues: uncharacterized protein (212 aa).

The N-terminal stretch at 1–18 is a signal peptide; it reads MIPLVALLVLLTLQASPG. The helical transmembrane segment at 186–208 threads the bilayer; it reads IYRLATFFMVSLFVGSFVALVFV.

The protein to A.fulgidus AF_0540.

It localises to the membrane. This is an uncharacterized protein from Archaeoglobus fulgidus (strain ATCC 49558 / DSM 4304 / JCM 9628 / NBRC 100126 / VC-16).